A 181-amino-acid polypeptide reads, in one-letter code: Lectin beta-1 and beta-2 chains (181 aa).

Residues E119 and D121 each contribute to the Mn(2+) site. Positions 121, 123, 125, and 129 each coordinate Ca(2+). Residues D129 and H136 each coordinate Mn(2+).

This sequence belongs to the leguminous lectin family. As to quaternary structure, tetramer of two alpha and two beta chains.

In Lathyrus ochrus (Cyprus-vetch), this protein is Lectin beta-1 and beta-2 chains.